The chain runs to 172 residues: MFYHISLEHEILLHPRYFGPNLLNTVKQKLFTEVEGTCTGKYGFVIAVTTIDNIGAGVIQPGRGFVLYPVKYKAIVFRPFKGEVVDAVVTQVNKVGLFTEIGPMSCFISRHSIPSEMEFDPNSNPPCYKTMDEDIVIQQDDEIRLKIVGTRVDKNDIFAIGSLMDDYLGLVS.

The protein belongs to the eukaryotic RPB7/RPC8 RNA polymerase subunit family. As to quaternary structure, component of the RNA polymerase II (Pol II) core complex consisting of 12 subunits: a ten-subunit catalytic core composed of POLR2A/RPB1, POLR2B/RPB2, POLR2C/RPB3, POLR2I/RPB9, POLR2J/RPB11, POLR2E/RPABC1, POLR2F/RPABC2, POLR2H/RPABC3, POLR2K/RPABC4 and POLR2L/RPABC5 and a mobile stalk composed of two subunits POLR2D/RPB4 and POLR2G/RPB7, protruding from the core and functioning primarily in transcription initiation. Part of Pol II(G) complex, in which Pol II core associates with an additional subunit POLR2M; unlike conventional Pol II, Pol II(G) functions as a transcriptional repressor. Part of TBP-based Pol II pre-initiation complex (PIC), in which Pol II core assembles with general transcription factors and other specific initiation factors including GTF2E1, GTF2E2, GTF2F1, GTF2F2, TCEA1, ERCC2, ERCC3, GTF2H2, GTF2H3, GTF2H4, GTF2H5, GTF2A1, GTF2A2, GTF2B and TBP; this large multi-subunit PIC complex mediates DNA unwinding and targets Pol II core to the transcription start site where the first phosphodiester bond forms.

The protein localises to the nucleus. Core component of RNA polymerase II (Pol II), a DNA-dependent RNA polymerase which synthesizes mRNA precursors and many functional non-coding RNAs using the four ribonucleoside triphosphates as substrates. Pol II is the central component of the basal RNA polymerase II transcription machinery. It is composed of mobile elements that move relative to each other. POLR2G/RPB7 is part of a subcomplex with POLR2D/RPB4 that binds to a pocket formed by POLR2A/RPB1, POLR2B/RPB2 and POLR2F/RPABC2 at the base of the clamp element. The POLR2D/RPB4-POLR2G/RPB7 subcomplex seems to lock the clamp via POLR2G/RPB7 in the closed conformation thus preventing double-stranded DNA to enter the active site cleft. The POLR2D/RPB4-POLR2G/RPB7 subcomplex binds single-stranded DNA and RNA. The polypeptide is DNA-directed RNA polymerase II subunit RPB7 (POLR2G) (Bos taurus (Bovine)).